We begin with the raw amino-acid sequence, 408 residues long: Alpha-2Da adrenergic receptor (408 aa).

At 1–30 the chain is on the extracellular side; that stretch reads MSVTPTANSTEEAANITASPRLWPYTEPAS. 2 N-linked (GlcNAc...) asparagine glycosylation sites follow: asparagine 8 and asparagine 15. Residues 31–55 traverse the membrane as a helical segment; it reads AIIILVVSLIILLTIVGNVLVIVAV. At 56 to 67 the chain is on the cytoplasmic side; that stretch reads LTSRALRAPQNL. The helical transmembrane segment at 68 to 93 threads the bilayer; it reads FLVSLACADILVATLVIPFSLANEIM. Residues 94-103 are Extracellular-facing; that stretch reads GYWYFGSTWC. Cysteine 103 and cysteine 176 are joined by a disulfide. Residues 104-126 form a helical membrane-spanning segment; sequence AFYLALDVLFCTSSIVHLCAISL. Over 127–147 the chain is Cytoplasmic; it reads DRYWSVTKAVRYNLKRTPRRI. The chain crosses the membrane as a helical span at residues 148–170; sequence KCMIAVVWLISAVISFPPLIMTK. At 171–181 the chain is on the extracellular side; the sequence is HDEKECLINDE. The chain crosses the membrane as a helical span at residues 182–205; the sequence is TWYILSSCAVSFFAPGLIMITVYC. Topologically, residues 206–332 are cytoplasmic; it reads KIYRVAKQRS…QMREKRFTFV (127 aa). Positions 242-306 are disordered; sequence FEKESPSSNS…SCRVSWAAHQ (65 aa). Acidic residues predominate over residues 260-270; the sequence is ELDDIDLEESA. Residues 277–286 are compositionally biased toward basic residues; it reads RGSRFSKRRR. Residues 333 to 356 traverse the membrane as a helical segment; sequence LAVVMGVFVLCWFPFFFTYSLQAV. Topologically, residues 357–369 are extracellular; that stretch reads CGERCGPPEALFK. Residues 370–390 traverse the membrane as a helical segment; sequence LFFWIGYCNSSVNPIIYTIFN. The Cytoplasmic portion of the chain corresponds to 391 to 408; the sequence is RDFRKAFKKVVCWSAQRT.

The protein belongs to the G-protein coupled receptor 1 family. Adrenergic receptor subfamily. ADRA2D sub-subfamily.

Its subcellular location is the cell membrane. In terms of biological role, alpha-2 adrenergic receptors mediate the catecholamine-induced inhibition of adenylate cyclase through the action of G proteins. The order of potency for this receptor is dexmedetomidine &gt; norepinephrine &gt; epinephrine &gt; oxymetazoline. This Danio rerio (Zebrafish) protein is Alpha-2Da adrenergic receptor (adra2da).